A 345-amino-acid chain; its full sequence is Phenylalanine--tRNA ligase alpha subunit (345 aa).

Residue Glu-255 participates in Mg(2+) binding.

It belongs to the class-II aminoacyl-tRNA synthetase family. Phe-tRNA synthetase alpha subunit type 1 subfamily. Tetramer of two alpha and two beta subunits. Requires Mg(2+) as cofactor.

It localises to the cytoplasm. It carries out the reaction tRNA(Phe) + L-phenylalanine + ATP = L-phenylalanyl-tRNA(Phe) + AMP + diphosphate + H(+). The polypeptide is Phenylalanine--tRNA ligase alpha subunit (Lysinibacillus sphaericus (strain C3-41)).